The sequence spans 272 residues: Undecaprenyl-diphosphatase (272 aa).

The next 8 helical transmembrane spans lie at 4–24 (IHSL…EFLP), 45–65 (AETF…VMFW), 89–109 (LTLG…LVFH), 115–135 (LFNP…LIAA), 152–174 (TYRQ…FSRS), 189–209 (YAAS…ATAL), 225–245 (MFAV…KTFL), and 251–271 (ISFI…YVVF).

Belongs to the UppP family.

The protein localises to the cell inner membrane. The catalysed reaction is di-trans,octa-cis-undecaprenyl diphosphate + H2O = di-trans,octa-cis-undecaprenyl phosphate + phosphate + H(+). Functionally, catalyzes the dephosphorylation of undecaprenyl diphosphate (UPP). Confers resistance to bacitracin. This Citrobacter koseri (strain ATCC BAA-895 / CDC 4225-83 / SGSC4696) protein is Undecaprenyl-diphosphatase.